The primary structure comprises 181 residues: ATP synthase subunit delta (181 aa).

This sequence belongs to the ATPase delta chain family. F-type ATPases have 2 components, F(1) - the catalytic core - and F(0) - the membrane proton channel. F(1) has five subunits: alpha(3), beta(3), gamma(1), delta(1), epsilon(1). F(0) has three main subunits: a(1), b(2) and c(10-14). The alpha and beta chains form an alternating ring which encloses part of the gamma chain. F(1) is attached to F(0) by a central stalk formed by the gamma and epsilon chains, while a peripheral stalk is formed by the delta and b chains.

It is found in the cell inner membrane. Functionally, f(1)F(0) ATP synthase produces ATP from ADP in the presence of a proton or sodium gradient. F-type ATPases consist of two structural domains, F(1) containing the extramembraneous catalytic core and F(0) containing the membrane proton channel, linked together by a central stalk and a peripheral stalk. During catalysis, ATP synthesis in the catalytic domain of F(1) is coupled via a rotary mechanism of the central stalk subunits to proton translocation. In terms of biological role, this protein is part of the stalk that links CF(0) to CF(1). It either transmits conformational changes from CF(0) to CF(1) or is implicated in proton conduction. In Chlorobium phaeobacteroides (strain DSM 266 / SMG 266 / 2430), this protein is ATP synthase subunit delta.